Reading from the N-terminus, the 158-residue chain is Snaclec coagulation factor X-activating enzyme light chain 2 (158 aa).

An N-terminal signal peptide occupies residues 1-24 (MGRFISVSFGLLVVFLSLSGTGAG). Intrachain disulfides connect C27–C38, C55–C152, and C127–C144. In terms of domain architecture, C-type lectin spans 34–153 (YRYFCYRVFK…CEERYLFVCK (120 aa)). The N-linked (GlcNAc...) (complex) asparagine glycan is linked to N82.

It belongs to the snaclec family. In terms of assembly, heterotrimer; disulfide-linked. The heterotrimer consists of 1 heavy chain (a metalloproteinase) and 2 light chains: LC1 and LC2. In terms of processing, N-glycosylated; probably required for conformation. Removal of easily accessible sugars does not change its functional capacity, but removal of the core sugars with N-glycanase causes a virtually complete loss of enzyme activity, apparently as a result of major conformational changes in the molecule. Not O-glycosylated. Expressed by the venom gland.

It localises to the secreted. Regulatory subunit of the blood coagulation factor X- and IX-activating enzyme. The enzyme activates coagulation factor X (F10) by cleaving the Arg-Ile bond and is also able to activate coagulation factor IX (F9) and protein S (PROS1) by specific cleavage of Arg-Ile and Arg-Val bonds. May serve as an exosite by which the enzyme recognizes and binds to the Gla domain of factor X (F10) and factor IX (F9) in a calcium-dependent manner. The sequence is that of Snaclec coagulation factor X-activating enzyme light chain 2 (LC2) from Daboia siamensis (Eastern Russel's viper).